The primary structure comprises 252 residues: Ribosome maturation factor RimP (252 aa).

The segment at 188–252 (QGAAPGTEGG…PAAGPGAQDE (65 aa)) is disordered. A compositionally biased stretch (basic residues) spans 208–224 (ARRPHQPKPKKAKKKGP).

It belongs to the RimP family.

The protein localises to the cytoplasm. Required for maturation of 30S ribosomal subunits. The sequence is that of Ribosome maturation factor RimP from Rhodospirillum centenum (strain ATCC 51521 / SW).